Reading from the N-terminus, the 96-residue chain is Evasin P1074 (96 aa).

Positions Met-1 to Ala-28 are cleaved as a signal peptide. 3 disulfide bridges follow: Cys-48-Cys-67, Cys-52-Cys-69, and Cys-63-Cys-80. N-linked (GlcNAc...) asparagine glycosylation occurs at Asn-74.

The protein resides in the secreted. Its function is as follows. Salivary chemokine-binding protein which binds to host chemokines CXCL1 and CXCL8. This is Evasin P1074 from Ixodes ricinus (Common tick).